Here is a 620-residue protein sequence, read N- to C-terminus: Glutathione-regulated potassium-efflux system protein KefC (620 aa).

The next 12 helical transmembrane spans lie at 4-24 (HTLL…PIAV), 26-46 (LGLG…PWGL), 54-74 (SILH…GLEL), 90-110 (GALQ…FLGL), 114-134 (VAEL…MQAM), 149-169 (FAVL…IPLL), 178-198 (LGAF…VVLL), 218-238 (VFSA…EEVG), 270-290 (GLLL…GTLV), 294-314 (LRIL…LWLV), 327-347 (WFAV…GAAQ), and 359-379 (ALTL…VLLT). The RCK N-terminal domain maps to 399-518 (QPRVIVAGFG…AGVAMPERET (120 aa)). The segment at 599–620 (QGTAEGKHSGEVADEPEVKPSI) is disordered.

Belongs to the monovalent cation:proton antiporter 2 (CPA2) transporter (TC 2.A.37) family. KefC subfamily. Homodimer. Interacts with the regulatory subunit KefF.

It is found in the cell inner membrane. Functionally, pore-forming subunit of a potassium efflux system that confers protection against electrophiles. Catalyzes K(+)/H(+) antiport. This is Glutathione-regulated potassium-efflux system protein KefC from Salmonella agona (strain SL483).